A 454-amino-acid chain; its full sequence is Alkaline extracellular protease (454 aa).

The first 15 residues, 1–15 (MKLATAFTILTAVLA), serve as a signal peptide directing secretion. Residues 16-157 (APLAAPAPAP…EIPASSNAKR (142 aa)) constitute a propeptide that is removed on maturation. Positions 68-146 (FIVVFDSSAT…TVEPDTIVSL (79 aa)) constitute an Inhibitor I9 domain. The N-linked (GlcNAc...) asparagine glycan is linked to asparagine 123. The 289-residue stretch at 166 to 454 (QWGLSRISHK…NAVAYNGVGI (289 aa)) folds into the Peptidase S8 domain. Active-site charge relay system residues include aspartate 200, histidine 231, and serine 397.

It belongs to the peptidase S8 family. Post-translationally, the pro-region is removed through cleavage by XPR6 after Lys156-Arg157, which yields mature active XPR2. The 10 consecutive -X-Ala- or -X-Pro- dipeptides located over 100 amino acids upstream of the N-terminal of mature XPR2 are subject to dipeptidyl aminopeptidase (DPAPase)-processing. DPAPase activity is not necessary for XPR6 cleavage and for secretion of mature active XPR2. In terms of processing, N-glycosylated. Glycosylation within the pro-region has no effect on secretion and maturation at 18 degrees Celsius, but is required for secretion at 28 degrees Celsius.

The protein localises to the secreted. The enzyme catalyses Hydrolysis of proteins with broad specificity for peptide bonds, and a preference for a large uncharged residue in P1. Hydrolyzes peptide amides.. Its activity is regulated as follows. The protease activity is completely inhibited by the serine inhibitor PMSF but is not affected by thiol group inhibitors and in the presence of dithiothreitol. In the presence of high concentrations of o-phenanthroline the protease activity is only partially inhibited. The pro-region plays an inhibitory role and may provide a mechanism for preventing premature activation in the secretory pathway. Major secreted protein that belongs to the subtilisin family serine proteases. This is Alkaline extracellular protease from Yarrowia lipolytica (strain CLIB 122 / E 150) (Yeast).